The sequence spans 485 residues: MSLFDHSVSELHKKLNNKEISVTDLVEESYKRISDVEDNVKAFLTLDEENARAKAKELDAKIGAEDNGLLFGMPIGVKDNIVTNGLRTTCASKILANFDPIYDATVVQKLKAADTVTIGKLNMDEFAMGSSNENSGFYATKNPWNLDYVPGGSSGGSAAAVAAGEVLFSLGSDTGGSIRQPAAYCGVVGLKPTYGRVSRYGLVAFASSLDQIGPITRTVEDNAYLLQAISGIDRMDATSANVEVGNYLAGLTGDVKGLRIAVPKEYLGEGVGEEARESVLAALKVLEGMGATWEEVSLPHSKYALATYYLLSSSEASANLSRFDGVRYGVRSDNVNNLLDLYKNTRSEGFGDEVKRRIMLGTFALSSGYYDAYYKKAQQVRTLIKNDFENVFANYDVIIGPTTPTPAFKVGEKVDDPMTMYANDILTIPVNLAGVPAISVPCGFGANNMPLGLQIIGKHFDETTIYRVAHAFEQATDYHTKKASL.

Residues Lys78 and Ser153 each act as charge relay system in the active site. Ser177 serves as the catalytic Acyl-ester intermediate.

This sequence belongs to the amidase family. GatA subfamily. As to quaternary structure, heterotrimer of A, B and C subunits.

The enzyme catalyses L-glutamyl-tRNA(Gln) + L-glutamine + ATP + H2O = L-glutaminyl-tRNA(Gln) + L-glutamate + ADP + phosphate + H(+). Its function is as follows. Allows the formation of correctly charged Gln-tRNA(Gln) through the transamidation of misacylated Glu-tRNA(Gln) in organisms which lack glutaminyl-tRNA synthetase. The reaction takes place in the presence of glutamine and ATP through an activated gamma-phospho-Glu-tRNA(Gln). The sequence is that of Glutamyl-tRNA(Gln) amidotransferase subunit A from Bacillus mycoides (strain KBAB4) (Bacillus weihenstephanensis).